Consider the following 305-residue polypeptide: UDP-3-O-acyl-N-acetylglucosamine deacetylase (305 aa).

Positions 79, 238, and 242 each coordinate Zn(2+). Catalysis depends on H265, which acts as the Proton donor.

This sequence belongs to the LpxC family. Zn(2+) serves as cofactor.

The enzyme catalyses a UDP-3-O-[(3R)-3-hydroxyacyl]-N-acetyl-alpha-D-glucosamine + H2O = a UDP-3-O-[(3R)-3-hydroxyacyl]-alpha-D-glucosamine + acetate. Its pathway is glycolipid biosynthesis; lipid IV(A) biosynthesis; lipid IV(A) from (3R)-3-hydroxytetradecanoyl-[acyl-carrier-protein] and UDP-N-acetyl-alpha-D-glucosamine: step 2/6. In terms of biological role, catalyzes the hydrolysis of UDP-3-O-myristoyl-N-acetylglucosamine to form UDP-3-O-myristoylglucosamine and acetate, the committed step in lipid A biosynthesis. This chain is UDP-3-O-acyl-N-acetylglucosamine deacetylase, found in Shewanella woodyi (strain ATCC 51908 / MS32).